Here is a 321-residue protein sequence, read N- to C-terminus: Agamous-like MADS-box protein AGL80 (321 aa).

In terms of domain architecture, MADS-box spans 1-61 (MTRKKVKLAY…DTNPEVWPSN (61 aa)). A coiled-coil region spans residues 89–114 (FLKQRIAKATETLRRQRKDSRELEMT).

As to quaternary structure, interacts with AGL61 and AGL62. Forms a heterodimer with AGL61. Interacts with MEE14/CBP1. Expressed in the central cell of the female gametophyte and in early endosperm. Also detected in ovaries, young siliques, roots, leaves, stems, young flowers and anthers.

The protein localises to the nucleus. In terms of biological role, probable transcription factor. Controls central cell differentiation during female gametophyte development. Required for the expression of DEMETER and DD46, but not for the expression of FIS2. Probable transcription factor that may function in the maintenance of the proper function of the central cell in pollen tube attraction. This is Agamous-like MADS-box protein AGL80 (AGL80) from Arabidopsis thaliana (Mouse-ear cress).